Consider the following 368-residue polypeptide: Outer membrane protein assembly factor BamC (368 aa).

The first 18 residues, 1 to 18, serve as a signal peptide directing secretion; the sequence is MTTKFFIGTAIAVSVLSA. The N-palmitoyl cysteine moiety is linked to residue Cys-19. A lipid anchor (S-diacylglycerol cysteine) is attached at Cys-19.

The protein belongs to the BamC family. As to quaternary structure, part of the Bam complex.

The protein localises to the cell outer membrane. Part of the outer membrane protein assembly complex, which is involved in assembly and insertion of beta-barrel proteins into the outer membrane. This chain is Outer membrane protein assembly factor BamC, found in Pseudoalteromonas atlantica (strain T6c / ATCC BAA-1087).